Reading from the N-terminus, the 229-residue chain is Large ribosomal subunit protein uL1 (229 aa).

The protein belongs to the universal ribosomal protein uL1 family. As to quaternary structure, part of the 50S ribosomal subunit.

Binds directly to 23S rRNA. The L1 stalk is quite mobile in the ribosome, and is involved in E site tRNA release. In terms of biological role, protein L1 is also a translational repressor protein, it controls the translation of the L11 operon by binding to its mRNA. The polypeptide is Large ribosomal subunit protein uL1 (Pediococcus pentosaceus (strain ATCC 25745 / CCUG 21536 / LMG 10740 / 183-1w)).